The sequence spans 236 residues: Large ribosomal subunit protein uL3 (236 aa).

The tract at residues 139-163 (ARDSSTTHEHHRHVGAIGQRKTPGK) is disordered.

The protein belongs to the universal ribosomal protein uL3 family. Part of the 50S ribosomal subunit. Forms a cluster with proteins L14 and L19.

Functionally, one of the primary rRNA binding proteins, it binds directly near the 3'-end of the 23S rRNA, where it nucleates assembly of the 50S subunit. This is Large ribosomal subunit protein uL3 from Anaeromyxobacter sp. (strain Fw109-5).